We begin with the raw amino-acid sequence, 513 residues long: Sugar transport protein 7 (513 aa).

At 1-26 (MAGGSFGPTGVAKERAEQYQGKVTSY) the chain is on the cytoplasmic side. Helical transmembrane passes span 27–47 (VIIACLVAAIGGSIFGYDIGI), 84–104 (GLAAFTSSLYLAGLVSTLVAS), 121–141 (ISFLIGSGLNAGAVNLAMLLA), 144–164 (IMLGVGIGFGNQAVPLYLSEV), 171–191 (GGLNMMFQLATTIGIFTANMV), 205–225 (LSLGLAAFPALLMTLGGYFLP), 286–306 (LVMAICMPMFQILTGINSILF), 324–344 (YSSALTGAVLVLSTFISIGLV), 351–371 (ALLITGGIQMIICQVIVAVIL), 387–407 (VIVVIFICLFVVAFGWSWGPL), 427–447 (ITVAVNLLFTFIIAQAFLGLL), and 452–472 (FGIFLFFAGWVTVMTIFVYFL). The Cytoplasmic portion of the chain corresponds to 473-513 (LPETKGVPIEEMTLLWSKHWFWKKVLPDATNLEDESKNVSV).

The protein belongs to the major facilitator superfamily. Sugar transporter (TC 2.A.1.1) family.

Its subcellular location is the cell membrane. In terms of biological role, mediates an active uptake of hexoses, probably by sugar/hydrogen symport. The sequence is that of Sugar transport protein 7 (STP7) from Arabidopsis thaliana (Mouse-ear cress).